The primary structure comprises 377 residues: Alanine racemase (377 aa).

The Proton acceptor; specific for D-alanine role is filled by Lys35. At Lys35 the chain carries N6-(pyridoxal phosphate)lysine. Residue Arg130 participates in substrate binding. Residue Tyr260 is the Proton acceptor; specific for L-alanine of the active site. Residue Met312 participates in substrate binding.

Belongs to the alanine racemase family. Requires pyridoxal 5'-phosphate as cofactor.

The catalysed reaction is L-alanine = D-alanine. It participates in amino-acid biosynthesis; D-alanine biosynthesis; D-alanine from L-alanine: step 1/1. Its function is as follows. Catalyzes the interconversion of L-alanine and D-alanine. May also act on other amino acids. This Leptothrix cholodnii (strain ATCC 51168 / LMG 8142 / SP-6) (Leptothrix discophora (strain SP-6)) protein is Alanine racemase (alr).